The following is a 64-amino-acid chain: Large ribosomal subunit protein eL37 (64 aa).

The C4-type zinc finger occupies 1–6; the sequence is GRCSAC. Residues Cys-3 and Cys-6 each coordinate Zn(2+).

Belongs to the eukaryotic ribosomal protein eL37 family. Zn(2+) is required as a cofactor.

Functionally, binds to the 23S rRNA. The sequence is that of Large ribosomal subunit protein eL37 (RPL37) from Solanum lycopersicum (Tomato).